Consider the following 134-residue polypeptide: Flagellar basal-body rod protein FlgC (134 aa).

It belongs to the flagella basal body rod proteins family. As to quaternary structure, the basal body constitutes a major portion of the flagellar organelle and consists of four rings (L,P,S, and M) mounted on a central rod. The rod consists of about 26 subunits of FlgG in the distal portion, and FlgB, FlgC and FlgF are thought to build up the proximal portion of the rod with about 6 subunits each.

Its subcellular location is the bacterial flagellum basal body. The polypeptide is Flagellar basal-body rod protein FlgC (flgC) (Salmonella typhi).